The chain runs to 845 residues: Aryl hydrocarbon receptor (845 aa).

Residues 1 to 10 constitute a propeptide that is removed on maturation; it reads MNSSSASITY. A compositionally biased stretch (polar residues) spans 1–10; it reads MNSSSASITY. The tract at residues 1 to 39 is disordered; the sequence is MNSSSASITYASRKRRKPVQKTVKPVPAEGIKSNPSKRH. 2 consecutive short sequence motifs (nuclear localization signal) follow at residues 13-16 and 37-42; these read RKRR and KRHRDR. One can recognise a bHLH domain in the interval 27–80; it reads PAEGIKSNPSKRHRDRLNTELDRLASLLPFPQDVVNKLDKLSVLRLSVSYLRAK. Required for maintaining the overall integrity of the AHR:ARNT heterodimer and its transcriptional activity stretches follow at residues 50 to 82, 117 to 125, and 265 to 267; these read LASL…AKSF, LLQALNGFV, and FAI. Positions 64–72 match the Nuclear export signal motif; it reads LDKLSVLRL. The PAS 1 domain occupies 110 to 180; sequence NLQEGEFLLQ…RQLHWALNPS (71 aa). Residues 274–341 form the PAS 2 domain; sequence PSILEIRTKN…CAEYHIRMIK (68 aa). A PAC domain is found at 347–385; it reads LIVFRLLTKDNRWTWVQSNARLVYKNGRPDYIIATQRPL. Residues 820 to 845 form a disordered region; it reads NNTQPTTHLHPSEARPFSDLTSSGFL.

As to quaternary structure, homodimer. Heterodimer; efficient DNA binding requires dimerization with another bHLH protein. Interacts with ARNT; the heterodimer ARNT:AHR binds to core DNA sequence 5'-TGCGTG-3' within the dioxin response element (DRE) of target gene promoters and activates their transcription. Binds MYBBP1A. Interacts with coactivators including SRC-1, RIP140 and NOCA7, and with the corepressor SMRT. Interacts with NEDD8 and IVNS1ABP. Interacts with BMAL1. Interacts with HSP90AB1. Interacts with TIPARP; leading to mono-ADP-ribosylation of AHR and subsequent inhibition of AHR. In terms of processing, mono-ADP-ribosylated, leading to inhibit transcription activator activity of AHR.

It is found in the cytoplasm. The protein resides in the nucleus. Functionally, ligand-activated transcription factor that enables cells to adapt to changing conditions by sensing compounds from the environment, diet, microbiome and cellular metabolism, and which plays important roles in development, immunity and cancer. Upon ligand binding, translocates into the nucleus, where it heterodimerizes with ARNT and induces transcription by binding to xenobiotic response elements (XRE). Regulates a variety of biological processes, including angiogenesis, hematopoiesis, drug and lipid metabolism, cell motility and immune modulation. Xenobiotics can act as ligands: upon xenobiotic-binding, activates the expression of multiple phase I and II xenobiotic chemical metabolizing enzyme genes (such as the CYP1A1 gene). Mediates biochemical and toxic effects of halogenated aromatic hydrocarbons. Next to xenobiotics, natural ligands derived from plants, microbiota, and endogenous metabolism are potent AHR agonists. Tryptophan (Trp) derivatives constitute an important class of endogenous AHR ligands. Acts as a negative regulator of anti-tumor immunity: indoles and kynurenic acid generated by Trp catabolism act as ligand and activate AHR, thereby promoting AHR-driven cancer cell motility and suppressing adaptive immunity. Regulates the circadian clock by inhibiting the basal and circadian expression of the core circadian component PER1. Inhibits PER1 by repressing the CLOCK-BMAL1 heterodimer mediated transcriptional activation of PER1. The heterodimer ARNT:AHR binds to core DNA sequence 5'-TGCGTG-3' within the dioxin response element (DRE) of target gene promoters and activates their transcription. The chain is Aryl hydrocarbon receptor (AHR) from Delphinapterus leucas (Beluga whale).